Reading from the N-terminus, the 386-residue chain is Methionine aminopeptidase 1 (386 aa).

Residue Ala2 is modified to N-acetylalanine. A C6H2-type zinc finger spans residues 6–59 (TRVCETDGCSSEAKLQCPTCIKLGIQGSYFCSQECFKGSWATHKLLHKKAKDEK). Positions 9, 14, 22, 25, 36, 40, 48, and 52 each coordinate Zn(2+). His203 lines the a protein pocket. Residues Asp220, Asp231, and His294 each contribute to the Zn(2+) site. His301 contacts a protein. Glu327 and Glu358 together coordinate Zn(2+).

It belongs to the peptidase M24A family. Methionine aminopeptidase type 1 subfamily. As to quaternary structure, associates with the 60S ribosomal subunit of the 80S translational complex. It depends on Zn(2+) as a cofactor. Requires Co(2+) as cofactor. Mn(2+) serves as cofactor. Fe(2+) is required as a cofactor.

It is found in the cytoplasm. The enzyme catalyses Release of N-terminal amino acids, preferentially methionine, from peptides and arylamides.. Functionally, cotranslationally removes the N-terminal methionine from nascent proteins. The N-terminal methionine is often cleaved when the second residue in the primary sequence is small and uncharged (Met-Ala-, Cys, Gly, Pro, Ser, Thr, or Val). This is Methionine aminopeptidase 1 (METAP1) from Pongo abelii (Sumatran orangutan).